A 714-amino-acid chain; its full sequence is Solute carrier family 12 member 8 (714 aa).

The next 6 helical transmembrane spans lie at 37–60, 72–93, 99–116, 123–142, 154–173, and 185–205; these read VLFGTWDGVFTSCMINIFGVVLFL, LLGMFLVSFVILVALVTVLSGI, SSIGSGGVYSMISSVLGG, GLLYVFGQCVAGAMYITGFA, IWAVRGISVAVLLALLGINL, and LLLFLLAVSTLDFVVGSFTHL. Asparagine 221 carries N-linked (GlcNAc...) asparagine glycosylation. Transmembrane regions (helical) follow at residues 233–254, 266–289, 309–331, 360–377, and 383–403; these read FFTVFGVFFPAATGVMAGFNMG, LGSLAAVGISWFLYIIFVFLLGAI, GFLFLLGLYISSLASCMGGLYGA, PVAAICLTSLVTMAFVFV, and LAPIVTINFMLTYVAVDYSYF. Disordered regions lie at residues 471–503 and 530–550; these read KLESSQPRQGEGNRTPESQKRKSKKATKQTLQD and GQESCWNKQTSKSEGTQPEGT. A compositionally biased stretch (polar residues) spans 533-548; that stretch reads SCWNKQTSKSEGTQPE. Helical transmembrane passes span 593-616 and 622-643; these read CNPWVSLLGAVGSLLIMFVIQWVY and GVAAIVYFYIGRASPGLHLGSA.

Belongs to the SLC12A transporter family. Ubiquitous with very low level in normal skin.

The protein resides in the membrane. Its function is as follows. Cation/chloride cotransporter that may play a role in the control of keratinocyte proliferation. The sequence is that of Solute carrier family 12 member 8 (SLC12A8) from Homo sapiens (Human).